Consider the following 510-residue polypeptide: Sphingolipid C9-methyltransferase B (510 aa).

A glycan (N-linked (GlcNAc...) asparagine) is linked at Asn55. A run of 2 helical transmembrane segments spans residues 62–82 (LLGG…GGGA) and 84–104 (TFVF…WTYA). A glycan (N-linked (GlcNAc...) asparagine) is linked at Asn175. Residues 227 to 228 (YT), 264 to 272 (MLDIGCGWG), 290 to 295 (TIAENQ), and 320 to 321 (YR) each bind S-adenosyl-L-methionine. Asn294 carries N-linked (GlcNAc...) asparagine glycosylation.

The protein belongs to the CFA/CMAS family.

It localises to the membrane. It catalyses the reaction a (4E,8E)-4-sphinga-4,8-dienine ceramide + S-adenosyl-L-methionine = a 9-methyl-(4E,8E)-sphinga-4,8-dienine ceramide + S-adenosyl-L-homocysteine + H(+). The protein operates within lipid metabolism; sphingolipid metabolism. Its function is as follows. Catalyzes methylation of the sphingoid base component of glucosylceramides (GluCers) at the C9-position. Sphingolipid C9-methylation requires 4,8-desaturated ceramides as substrates. Glucosylceramides play important roles in growth, differentiation and pathogenicity. The methyl group at the C9-position distinguishes fungal glucosylceramides from those of plants and animals and may thus play a role in host-pathogen interactions enabling the host to recognize the fungal attack and initiate specific defense responses. This chain is Sphingolipid C9-methyltransferase B, found in Emericella nidulans (strain FGSC A4 / ATCC 38163 / CBS 112.46 / NRRL 194 / M139) (Aspergillus nidulans).